Here is a 307-residue protein sequence, read N- to C-terminus: Putative lipid kinase SE_0507 (307 aa).

A DAGKc domain is found at 3–139; the sequence is QPYNHGVLFY…YDVLKVNDLY (137 aa). ATP contacts are provided by residues S44, 74-80, and T101; that span reads GDGTLNE. 3 residues coordinate Mg(2+): S220, D223, and R225. E281 functions as the Proton acceptor in the catalytic mechanism.

This sequence belongs to the diacylglycerol/lipid kinase family. Requires Mg(2+) as cofactor.

Functionally, may catalyze the ATP-dependent phosphorylation of lipids other than diacylglycerol (DAG). This chain is Putative lipid kinase SE_0507, found in Staphylococcus epidermidis (strain ATCC 12228 / FDA PCI 1200).